Reading from the N-terminus, the 156-residue chain is Protein eva-1 homolog A (156 aa).

Residues 40–60 (ALYFVSGVCIGLFLTLAALVM) form a helical membrane-spanning segment. The interval 79 to 100 (DRECSDSSDSEDGSEDTASDLS) is disordered. Acidic residues predominate over residues 84 to 96 (DSSDSEDGSEDTA). Thr110 bears the Phosphothreonine mark. Ser118 is modified (phosphoserine).

This sequence belongs to the EVA1 family.

The protein resides in the endoplasmic reticulum membrane. It is found in the lysosome membrane. Acts as a regulator of programmed cell death, mediating both autophagy and apoptosis. The sequence is that of Protein eva-1 homolog A (Eva1a) from Mus musculus (Mouse).